The primary structure comprises 432 residues: Casein kinase II subunit alpha-4, chloroplastic (432 aa).

The transit peptide at methionine 1–serine 55 directs the protein to the chloroplast. The interval leucine 63 to glutamate 83 is disordered. Positions glutamine 66–glutamine 75 are enriched in low complexity. Residues tyrosine 132–phenylalanine 417 form the Protein kinase domain. ATP contacts are provided by residues valine 138–valine 146 and lysine 161. Aspartate 249 (proton acceptor) is an active-site residue.

This sequence belongs to the protein kinase superfamily. Ser/Thr protein kinase family. CK2 subfamily. Tetramer of two alpha and two beta chains. In terms of tissue distribution, expressed in root tips, lateral root primordia, cotyledons, leaf primordia, sepals, filaments, stigma, and anthers.

It localises to the plastid. It is found in the chloroplast. The catalysed reaction is L-seryl-[protein] + ATP = O-phospho-L-seryl-[protein] + ADP + H(+). It carries out the reaction L-threonyl-[protein] + ATP = O-phospho-L-threonyl-[protein] + ADP + H(+). Functionally, casein kinases are operationally defined by their preferential utilization of acidic proteins such as caseins as substrates. The alpha chain contains the catalytic site. Involved in the regulation of various developmental processes. Involved in the regulation of plant growth and flowering time. Involved in retrograde signaling in plant responses to abscisic acid (ABA) and heat stress. May act as an enhancing factor in abiotic stress signaling through modulation of the expression of some molecular players in retrograde signaling. Phosphorylates RuBisCo activase (RCA) at Thr-78. The chain is Casein kinase II subunit alpha-4, chloroplastic from Arabidopsis thaliana (Mouse-ear cress).